Here is a 326-residue protein sequence, read N- to C-terminus: tRNA uridine(34) hydroxylase (326 aa).

The Rhodanese domain maps to 123-217 (ADPEVFVVDT…YLEEVPQEES (95 aa)). The Cysteine persulfide intermediate role is filled by Cys-177. The span at 278–288 (QVERFREREKQ) shows a compositional bias: basic and acidic residues. Positions 278–326 (QVERFREREKQVSLANQRGEQHVGGESAKQRAQRREAKLAKKAAQRKQA) are disordered. Residues 317 to 326 (AKKAAQRKQA) show a composition bias toward basic residues.

This sequence belongs to the TrhO family.

The enzyme catalyses uridine(34) in tRNA + AH2 + O2 = 5-hydroxyuridine(34) in tRNA + A + H2O. Its function is as follows. Catalyzes oxygen-dependent 5-hydroxyuridine (ho5U) modification at position 34 in tRNAs. This is tRNA uridine(34) hydroxylase from Vibrio parahaemolyticus serotype O3:K6 (strain RIMD 2210633).